A 580-amino-acid polypeptide reads, in one-letter code: Alpha-thujene synthase, chloroplastic (580 aa).

The N-terminal 32 residues, 1 to 32, are a transit peptide targeting the chloroplast; sequence MALQLLTPSFSFQHSPSPHKLTTLRYTHHRIR. Residues R296, D333, D337, R473, and D476 each coordinate (2E)-geranyl diphosphate. The Mg(2+) site is built by D333 and D337. Residues 333-337 carry the DDXXD motif motif; that stretch reads DDVYD. The Mg(2+) site is built by D476, T480, and E484.

This sequence belongs to the terpene synthase family. Tpsb subfamily. In terms of assembly, monomer. It depends on Mg(2+) as a cofactor. Mn(2+) is required as a cofactor. Expressed in developing and mature fruits. Barely detectable in leaves and shoots.

The protein localises to the plastid. The protein resides in the chloroplast. The catalysed reaction is (2E)-geranyl diphosphate = alpha-thujene + diphosphate. The protein operates within secondary metabolite biosynthesis; terpenoid biosynthesis. Functionally, monoterpene synthase (TPS) involved in the biosynthesis of monoterpene natural products used by traditional Chinese medicine to treat headache, inflammation and intoxication. Catalyzes the conversion of (2E)-geranyl diphosphate (GPP) into alpha-thujene. The polypeptide is Alpha-thujene synthase, chloroplastic (Litsea cubeba (Aromatic litsea)).